A 223-amino-acid polypeptide reads, in one-letter code: Flagellar L-ring protein 2 (223 aa).

A signal peptide spans 1-17 (MKWLSKSWAVAVVLLVG). C18 is lipidated: N-palmitoyl cysteine. C18 carries S-diacylglycerol cysteine lipidation.

The protein belongs to the FlgH family. As to quaternary structure, the basal body constitutes a major portion of the flagellar organelle and consists of four rings (L,P,S, and M) mounted on a central rod.

Its subcellular location is the cell outer membrane. It is found in the bacterial flagellum basal body. In terms of biological role, assembles around the rod to form the L-ring and probably protects the motor/basal body from shearing forces during rotation. This is Flagellar L-ring protein 2 from Vibrio parahaemolyticus serotype O3:K6 (strain RIMD 2210633).